The following is a 561-amino-acid chain: MVKVLQLCFLSAISLVQALNSTVDQKDEAKVDINTVFDNDSTNFCRMDKTEAIGATCDVTFHEINEVNNNIRPQLLSLVQSDFFKYFKLDLYKECPFWSDNNGYCVNRACAVDVVEDWDSLPEYWQPEILGNIENATTDITDDECSFLDELCDKPRFEAEKDIEYCDTNDFNSQHSVLVDLTANPERFTGYGGEQSSQIWSSIYKENCFSLGDENQCLAKDAFYRLISGLHASIGTHLSNEHLNTETGKWEPNLELFMTRVGNFPDRVSNIYFNFAVVAKALWKIRPYMNELGFCNAYNEDVKGMIDGVVSQLNSKVFNEDLLFHDEVSGQLKDDFRIRFKNVTKIMDCVQCDRCRLWGKVQTTGYATSLKILFEMDNDDDVARQHVVDKLTKYELIALFNTFDRLSKSVEAVNRFEEMYNYQLKSPGEKLASFFQLDNFFKVLNDKFNSANHSSQEKESVSNVEKKVNEFNDLKMPEKKKETHTEVREQASGVFKEAWDVEWKNFKQALRFIVTSYTDLPSTVSKYTVLKLNKLWNKFIGVPNYLEEGEELEYPSYNYEE.

The signal sequence occupies residues 1–18; sequence MVKVLQLCFLSAISLVQA. N-linked (GlcNAc...) asparagine glycans are attached at residues N20 and N39. Intrachain disulfides connect C95/C349, C105/C110, C145/C166, C152/C295, and C352/C355. An N-linked (GlcNAc...) asparagine glycan is attached at N135. The FAD site is built by R187, T189, W200, S228, H231, and R260. N342 carries an N-linked (GlcNAc...) asparagine glycan. Catalysis depends on C352, which acts as the Nucleophile. C355 is a catalytic residue. A glycan (N-linked (GlcNAc...) asparagine) is linked at N452.

This sequence belongs to the EROs family. In terms of assembly, may function both as a monomer and a homodimer. It depends on FAD as a cofactor.

Its subcellular location is the endoplasmic reticulum membrane. Its function is as follows. Essential oxidoreductase that oxidizes proteins in the endoplasmic reticulum to produce disulfide bonds. Acts by oxidizing directly PDI1 isomerase through a direct disulfide exchange. Does not act as a direct oxidant of folding substrate, but relies on PDI1 to transfer oxidizing equivalent. Does not oxidize all pdi related proteins, suggesting that it can discriminate between PDI1 and related proteins. Its reoxidation probably involves electron transfer to molecular oxygen via FAD. Acts independently of glutathione. May be responsible for a significant proportion of reactive oxygen species (ROS) in the cell, thereby being a source of oxidative stress. The polypeptide is Endoplasmic reticulum oxidoreductin-1 (ERO1) (Kluyveromyces lactis (strain ATCC 8585 / CBS 2359 / DSM 70799 / NBRC 1267 / NRRL Y-1140 / WM37) (Yeast)).